Here is a 310-residue protein sequence, read N- to C-terminus: MFEHETVLKMESIEGLNIKPDGVYVDCTLGGAGHSEEIAKRLTTGQLYAFDQDDVALAHAKERLAPYEGRVTFIKSNFVHLKEELAQRGVTKVDGVLFDLGVSSPQLDEAERGFSYNYDAPLDMRMDRSRDFSAYHVVNEWSFGELARIFFTYGEEKFSKQIARKIEQARADKPIETTFELVDLIKEAIPAPARRKGGHPAKRTFQAIRIAVNDELNVFDRAVQDAIDLLAVNGRICVITFHSLEDRICKQVFKERSQHPPLPPGLPVIPKEFEPELKLITRKPIVASEGELEDNRRSRSAKLRVAEKQK.

S-adenosyl-L-methionine contacts are provided by residues 32 to 34 (AGH), D51, F78, D99, and Q106. Residues 290–310 (GELEDNRRSRSAKLRVAEKQK) form a disordered region.

The protein belongs to the methyltransferase superfamily. RsmH family.

The protein resides in the cytoplasm. The catalysed reaction is cytidine(1402) in 16S rRNA + S-adenosyl-L-methionine = N(4)-methylcytidine(1402) in 16S rRNA + S-adenosyl-L-homocysteine + H(+). In terms of biological role, specifically methylates the N4 position of cytidine in position 1402 (C1402) of 16S rRNA. This is Ribosomal RNA small subunit methyltransferase H from Exiguobacterium sp. (strain ATCC BAA-1283 / AT1b).